A 350-amino-acid chain; its full sequence is Phenylalanine--tRNA ligase alpha subunit (350 aa).

Mg(2+) is bound at residue glutamate 257.

The protein belongs to the class-II aminoacyl-tRNA synthetase family. Phe-tRNA synthetase alpha subunit type 1 subfamily. Tetramer of two alpha and two beta subunits. It depends on Mg(2+) as a cofactor.

The protein localises to the cytoplasm. It catalyses the reaction tRNA(Phe) + L-phenylalanine + ATP = L-phenylalanyl-tRNA(Phe) + AMP + diphosphate + H(+). This is Phenylalanine--tRNA ligase alpha subunit from Listeria monocytogenes serotype 4a (strain HCC23).